We begin with the raw amino-acid sequence, 333 residues long: Ketol-acid reductoisomerase (NADP(+)) (333 aa).

Positions Met1–Thr171 constitute a KARI N-terminal Rossmann domain. NADP(+) is bound by residues Tyr14–Gln17, Arg37, Thr42, and Asp72–Gln75. His97 is a catalytic residue. Position 123 (Gly123) interacts with NADP(+). The region spanning Thr172–Leu317 is the KARI C-terminal knotted domain. 4 residues coordinate Mg(2+): Asp180, Glu184, Glu216, and Glu220. Ser241 is a binding site for substrate.

Belongs to the ketol-acid reductoisomerase family. Mg(2+) serves as cofactor.

The enzyme catalyses (2R)-2,3-dihydroxy-3-methylbutanoate + NADP(+) = (2S)-2-acetolactate + NADPH + H(+). It carries out the reaction (2R,3R)-2,3-dihydroxy-3-methylpentanoate + NADP(+) = (S)-2-ethyl-2-hydroxy-3-oxobutanoate + NADPH + H(+). It functions in the pathway amino-acid biosynthesis; L-isoleucine biosynthesis; L-isoleucine from 2-oxobutanoate: step 2/4. It participates in amino-acid biosynthesis; L-valine biosynthesis; L-valine from pyruvate: step 2/4. In terms of biological role, involved in the biosynthesis of branched-chain amino acids (BCAA). Catalyzes an alkyl-migration followed by a ketol-acid reduction of (S)-2-acetolactate (S2AL) to yield (R)-2,3-dihydroxy-isovalerate. In the isomerase reaction, S2AL is rearranged via a Mg-dependent methyl migration to produce 3-hydroxy-3-methyl-2-ketobutyrate (HMKB). In the reductase reaction, this 2-ketoacid undergoes a metal-dependent reduction by NADPH to yield (R)-2,3-dihydroxy-isovalerate. The protein is Ketol-acid reductoisomerase (NADP(+)) of Xanthomonas axonopodis pv. citri (strain 306).